A 655-amino-acid chain; its full sequence is MKGASEEKLASVSNLVTVFENSRTPEAAPRGQRLEDVHHRPECRPPESPGPREKTNVGEAVGSEPRTVSRRYLNSLKNKLSSEAWRKSCQPVTLSGSGTQEPEKKIVQELLETEQAYVARLHLLDQVFFQELLKTARSSKAFPEDVVRVIFSNISSIYQFHSQFFLPELQRRLDDWTANPRIGDVIQKLAPFLKMYSEYVKNFERAAELLATWTDKSPLFQEVLTRIQSSEASGSLTLQHHMLEPVQRIPRYELLLKEYIQKLPAQAPDQADAQKALDMIFSAAQHSNAAITEMERLQDLWEVYQRLGLEDDIVDPSNTLLREGPVLKISFRRNDPMERYLFLFNNMLLYCVPRVIQVGAQFQVRTRIDVAGMKVRELMDAEFPHSFLVSGKQRTLELQARSQEEMISWMQAFQAAIDQIEKRNETFKAAAQGPEGDIQEQELQSEELGLRAPQWVRDKMVTMCMRCQEPFNALTRRRHHCRACGYVVCARCSDYRAELKYDDNRPNRVCLHCYAFLTGNVLPEAKEDKRRGILEKGSSATPDQSLMCSFLQLIGDKWGKSGPRGWCVIPRDDPLVLYVYAAPQDMRAHTSIPLLGYQVTVGPQGDPRVFQLQQSGQLYTFKAETEELKGRWVKAMERAASGWSPSWPNDGDLSD.

2 positions are modified to phosphoserine: Ser11 and Ser48. Positions 18 to 64 are disordered; sequence VFENSRTPEAAPRGQRLEDVHHRPECRPPESPGPREKTNVGEAVGSE. Over residues 32–56 the composition is skewed to basic and acidic residues; sequence QRLEDVHHRPECRPPESPGPREKTN. Residues 102 to 290 form the DH domain; it reads PEKKIVQELL…FSAAQHSNAA (189 aa). Positions 319–418 constitute a PH 1 domain; sequence TLLREGPVLK…WMQAFQAAID (100 aa). The FYVE-type zinc finger occupies 458–518; it reads DKMVTMCMRC…VCLHCYAFLT (61 aa). Residues Cys464, Cys467, Cys481, Cys484, Cys489, Cys492, Cys510, and Cys513 each contribute to the Zn(2+) site. Positions 544 to 641 constitute a PH 2 domain; sequence QSLMCSFLQL…WVKAMERAAS (98 aa). Ser654 is modified (phosphoserine).

It localises to the cytoplasm. The protein resides in the cytoskeleton. It is found in the nucleus. Its subcellular location is the early endosome. The protein localises to the early endosome membrane. It localises to the cell projection. The protein resides in the ruffle membrane. Its function is as follows. Activates CDC42, a member of the Ras-like family of Rho- and Rac proteins, by exchanging bound GDP for free GTP. Activates JNK1 via CDC42 but not RAC1. Binds to phosphatidylinositol 4,5-bisphosphate, phosphatidylinositol 3,4,5-trisphosphate, phosphatidylinositol 5-monophosphate, phosphatidylinositol 4-monophosphate and phosphatidylinositol 3-monophosphate. In Homo sapiens (Human), this protein is FYVE, RhoGEF and PH domain-containing protein 2 (FGD2).